Consider the following 206-residue polypeptide: Pyridoxal 5'-phosphate synthase subunit PdxT (206 aa).

59–61 (GES) provides a ligand contact to L-glutamine. The active-site Nucleophile is Cys91. Residues Arg123 and 151 to 152 (IR) each bind L-glutamine. Catalysis depends on charge relay system residues His187 and Glu189.

It belongs to the glutaminase PdxT/SNO family. As to quaternary structure, in the presence of PdxS, forms a dodecamer of heterodimers. Only shows activity in the heterodimer.

The catalysed reaction is aldehydo-D-ribose 5-phosphate + D-glyceraldehyde 3-phosphate + L-glutamine = pyridoxal 5'-phosphate + L-glutamate + phosphate + 3 H2O + H(+). The enzyme catalyses L-glutamine + H2O = L-glutamate + NH4(+). It participates in cofactor biosynthesis; pyridoxal 5'-phosphate biosynthesis. Catalyzes the hydrolysis of glutamine to glutamate and ammonia as part of the biosynthesis of pyridoxal 5'-phosphate. The resulting ammonia molecule is channeled to the active site of PdxS. This chain is Pyridoxal 5'-phosphate synthase subunit PdxT, found in Mycobacterium sp. (strain JLS).